The following is a 971-amino-acid chain: MRPPAGLPSLSRRSRILLVVAVVVAALLLVGPRLIGMYTDWLWFGEVGYRGVFTKVLLTRFVLFLVVGIVVGAIVWLAMLLAYRARPVFVPVSGPNDPIARYRTTVMSRLRLFGVIIPVAIGILSGLIAQANWVTIQLFLNGQPFGITDPQFNLDVGFYTFDLPFYRFVLNWLFVSILLAFVANLVTHYVFGGIKLAGRAGTFTTAARVQLAVIAGTFVLLKAVAYWFDRYSLMSSSRKEPTFTGPGFTDINAVLPAKLILLSIAVICALAFFASIFTRDLRIPAMAVALLVLSSVLVGAVYPMIVEQFSVKPNAAQKESTYIERNIEATRQAYGITEENVDYVDYPGVGTKQPQDVPADRTTIANTRLLDPTILSPTFTAQRQLKNFYGFPQTLNVDRYEQDGQLRDFVVAARELSPNNLSGNQTDWINKHTVYTHGNGFVAAQANEVTAVQGDSQNNTGGYPIYSVSDLTTTPENENLKVDNPRSYYGEVISQSDADYSIVGSVDGEGPREYDTDTSKYTYTGSGGVSIGNWFNRLAFAAKYTERNILFSSAIGSNSKIIFKRDPKERVEEVAPWLTTDGAAYPAVVDGKMQWIIDGYTTAQDYPYAQRSSLDGLVEDSIDQTTGRLIPRQEFSYIRNSVKATVDAYDGTVTLYQVDEQDPVLKAWMGVFPNTVKPKSEISDDLQAHFRYPEDMFKVQREMLAKYHVDDPSEFFTNNAFWSVPSDPTIDTSANQPPYYVLVGDKDTAKADFRLTSPMVGFSRELLSAYISVANDKENYGKFTVLQLPTDTQTQGPQQAQSAMTSDSRVASEVSLLKQSNKIQYGNLLTLPIAEGGILYVEPLYSQRNSQNAFPQLARVLVSFSDTNGIRIGYAPTVSEAISQIWPGAGSAATVTQPAPDPDTGAQPETPTTPTAPAPPASSDDVTKALAEVNSAMAALKSAQQSGDFTSYGAALDRLQKAVDAYQALPR.

Helical transmembrane passes span 16–36 (ILLV…RLIG), 61–81 (FVLF…AMLL), 112–132 (LFGV…AQAN), 172–192 (WLFV…YVFG), 209–229 (VQLA…YWFD), 257–277 (AKLI…ASIF), and 286–306 (MAVA…PMIV). The tract at residues 890-927 (GSAATVTQPAPDPDTGAQPETPTTPTAPAPPASSDDVT) is disordered.

The protein belongs to the UPF0182 family.

Its subcellular location is the cell membrane. The chain is UPF0182 protein RER_22310 from Rhodococcus erythropolis (strain PR4 / NBRC 100887).